Consider the following 184-residue polypeptide: Outer-membrane lipoprotein carrier protein (184 aa).

Positions 1–19 (MRAFLKILMVLIFMSVAYA) are cleaved as a signal peptide.

The protein belongs to the LolA family. Monomer.

The protein resides in the periplasm. Its function is as follows. Participates in the translocation of lipoproteins from the inner membrane to the outer membrane. Only forms a complex with a lipoprotein if the residue after the N-terminal Cys is not an aspartate (The Asp acts as a targeting signal to indicate that the lipoprotein should stay in the inner membrane). The polypeptide is Outer-membrane lipoprotein carrier protein (Helicobacter pylori (strain HPAG1)).